Here is a 275-residue protein sequence, read N- to C-terminus: Large ribosomal subunit protein uL2 (275 aa).

The segment at 219–263 is disordered; it reads EVRGAAMNPRDHPHGGGEGRAPRGMPTPKTKWGKPARGVKTRHNP. Residues 227 to 239 are compositionally biased toward basic and acidic residues; the sequence is PRDHPHGGGEGRA. Residues 249–262 are compositionally biased toward basic residues; it reads KWGKPARGVKTRHN.

This sequence belongs to the universal ribosomal protein uL2 family. In terms of assembly, part of the 50S ribosomal subunit. Forms a bridge to the 30S subunit in the 70S ribosome.

In terms of biological role, one of the primary rRNA binding proteins. Required for association of the 30S and 50S subunits to form the 70S ribosome, for tRNA binding and peptide bond formation. It has been suggested to have peptidyltransferase activity; this is somewhat controversial. Makes several contacts with the 16S rRNA in the 70S ribosome. This is Large ribosomal subunit protein uL2 from Roseiflexus castenholzii (strain DSM 13941 / HLO8).